Here is a 156-residue protein sequence, read N- to C-terminus: Small ribosomal subunit protein uS7 (156 aa).

The protein belongs to the universal ribosomal protein uS7 family. As to quaternary structure, part of the 30S ribosomal subunit. Contacts proteins S9 and S11.

Its function is as follows. One of the primary rRNA binding proteins, it binds directly to 16S rRNA where it nucleates assembly of the head domain of the 30S subunit. Is located at the subunit interface close to the decoding center, probably blocks exit of the E-site tRNA. This chain is Small ribosomal subunit protein uS7, found in Anaeromyxobacter sp. (strain Fw109-5).